The chain runs to 288 residues: Capsid protein (288 aa).

Alanine 2 carries the post-translational modification N-acetylalanine; by host.

The protein belongs to the high plain virus capsid family.

The protein resides in the virion. The polypeptide is Capsid protein (High plains virus (isolate Kansas 2004)).